Consider the following 221-residue polypeptide: GTP cyclohydrolase 1 (221 aa).

Residues Cys-111, His-114, and Cys-182 each contribute to the Zn(2+) site.

This sequence belongs to the GTP cyclohydrolase I family. Homomer.

The catalysed reaction is GTP + H2O = 7,8-dihydroneopterin 3'-triphosphate + formate + H(+). It participates in cofactor biosynthesis; 7,8-dihydroneopterin triphosphate biosynthesis; 7,8-dihydroneopterin triphosphate from GTP: step 1/1. This Erwinia tasmaniensis (strain DSM 17950 / CFBP 7177 / CIP 109463 / NCPPB 4357 / Et1/99) protein is GTP cyclohydrolase 1.